The primary structure comprises 240 residues: MCTLEKRGDLFLLTLTGDGEHRFHPDTIATILSLLEQAKSQSTRGSILITTANGKFFSNGFDLAWAQTAGSKTGAANRLHQMVESFKPVVAALLDLPMPTIAALNGHAAAAGLILALSHDYVFMRKDRGVLYMSEVDIGLSMPDYFSALVRAKIGTSAARRELLLSGKKIRGEEAVGLGIVDSAAYDSEEGVVVASVRLGEKLAAKKWSGEVYASIRKSLYPELCGILGLETRVFATPKL.

A Microbody targeting signal motif is present at residues 238–240 (PKL).

This sequence belongs to the enoyl-CoA hydratase/isomerase family.

Its subcellular location is the peroxisome. The catalysed reaction is a (3Z)-enoyl-CoA = a 4-saturated (2E)-enoyl-CoA. It carries out the reaction a (3E)-enoyl-CoA = a 4-saturated (2E)-enoyl-CoA. It participates in lipid metabolism; fatty acid beta-oxidation. In terms of biological role, able to isomerize both 3-cis and 3-trans double bonds into the 2-trans form in a range of enoyl-CoA species. Essential for the beta oxidation of unsaturated fatty acids. Involved with IBR1 and IBR3 in the peroxisomal beta-oxidation of indole-3-butyric acid (IBA) to form indole-3-acetic acid (IAA), a biologically active auxin. The polypeptide is Enoyl-CoA delta isomerase 2, peroxisomal (Arabidopsis thaliana (Mouse-ear cress)).